Consider the following 184-residue polypeptide: MNAVFPGSFDPITSGHMDVLTRASRIFEHVTVTVMHNARKQGRHLFSLEERLEILREATAHLPNVSVDSFSGLLVDYMRQQQKGIIVRGLRAVSDYEYELQIAHLNRQIGEVETVFIMAATRWSFVSSTMVKEIASYGGDISEMVPRASAAALKRKFAQQYAAREAELSSAGERGAQQAAESKT.

Serine 8 provides a ligand contact to substrate. ATP contacts are provided by residues 8 to 9 (SF) and histidine 16. Residues lysine 40, leucine 74, and arginine 88 each contribute to the substrate site. ATP-binding positions include 89 to 91 (GLR), glutamate 99, and 123 to 129 (WSFVSST).

The protein belongs to the bacterial CoaD family. In terms of assembly, homohexamer. It depends on Mg(2+) as a cofactor.

Its subcellular location is the cytoplasm. The catalysed reaction is (R)-4'-phosphopantetheine + ATP + H(+) = 3'-dephospho-CoA + diphosphate. Its pathway is cofactor biosynthesis; coenzyme A biosynthesis; CoA from (R)-pantothenate: step 4/5. Reversibly transfers an adenylyl group from ATP to 4'-phosphopantetheine, yielding dephospho-CoA (dPCoA) and pyrophosphate. The chain is Phosphopantetheine adenylyltransferase from Deinococcus geothermalis (strain DSM 11300 / CIP 105573 / AG-3a).